The following is a 280-amino-acid chain: Dermonecrotic toxin LgSicTox-alphaIA1 (280 aa).

The active site involves H12. Mg(2+) contacts are provided by E32 and D34. H48 (nucleophile) is an active-site residue. An intrachain disulfide couples C52 to C58. Position 92 (D92) interacts with Mg(2+).

Belongs to the arthropod phospholipase D family. Class I subfamily. Mg(2+) serves as cofactor. Expressed by the venom gland.

It localises to the secreted. It catalyses the reaction an N-(acyl)-sphingosylphosphocholine = an N-(acyl)-sphingosyl-1,3-cyclic phosphate + choline. The enzyme catalyses an N-(acyl)-sphingosylphosphoethanolamine = an N-(acyl)-sphingosyl-1,3-cyclic phosphate + ethanolamine. The catalysed reaction is a 1-acyl-sn-glycero-3-phosphocholine = a 1-acyl-sn-glycero-2,3-cyclic phosphate + choline. It carries out the reaction a 1-acyl-sn-glycero-3-phosphoethanolamine = a 1-acyl-sn-glycero-2,3-cyclic phosphate + ethanolamine. Its function is as follows. Dermonecrotic toxins cleave the phosphodiester linkage between the phosphate and headgroup of certain phospholipids (sphingolipid and lysolipid substrates), forming an alcohol (often choline) and a cyclic phosphate. This toxin acts on sphingomyelin (SM). It may also act on ceramide phosphoethanolamine (CPE), lysophosphatidylcholine (LPC) and lysophosphatidylethanolamine (LPE), but not on lysophosphatidylserine (LPS), and lysophosphatidylglycerol (LPG). It acts by transphosphatidylation, releasing exclusively cyclic phosphate products as second products. Induces dermonecrosis, hemolysis, increased vascular permeability, edema, inflammatory response, and platelet aggregation. In Loxosceles gaucho (Spider), this protein is Dermonecrotic toxin LgSicTox-alphaIA1.